We begin with the raw amino-acid sequence, 432 residues long: Acyl-CoA dehydrogenase AFT10-1 (432 aa).

This sequence belongs to the acyl-CoA dehydrogenase family. It depends on FAD as a cofactor.

It functions in the pathway mycotoxin biosynthesis. In terms of biological role, acyl-CoA dehydrogenase; part of the gene clusters that mediate the biosynthesis of the host-selective toxins (HSTs) AF-toxins responsible for Alternaria black spot of strawberry disease by the strawberry pathotype. AF-toxin I and III are valine derivatives of 2,3-dyhydroxy-isovaleric acid and 2-hydroxy-isovaleric acid respectively, while AF II is an isoleucine derivative of 2-hydroxy-valeric acid. These derivatives are bound to a 9,10-epoxy-8-hydroxy-9-methyl-decatrienoic acid (EDA) moiety. On cellular level, AF-toxins affect plasma membrane of susceptible cells and cause a sudden increase in loss of K(+) after a few minutes of toxin treatment. The aldo-keto reductase AFTS1 catalyzes the conversion of 2-keto-isovaleric acid (2-KIV) to 2-hydroxy-isovaleric acid (2-HIV) by reduction of its ketone to an alcohol. The acyl-CoA ligase AFT1, the hydrolase AFT2 and the enoyl-CoA hydratases AFT3 and AFT6, but also the polyketide synthase AFT9, the acyl-CoA dehydrogenase AFT10, the cytochrome P450 monooxygenase AFT11 and the oxidoreductase AFT12 are all involved in the biosynthesis of the AK-, AF- and ACT-toxin common EDA structural moiety. The exact function of each enzyme, and of additional enzymes identified within the AF-toxin clusters have still to be determined. This chain is Acyl-CoA dehydrogenase AFT10-1, found in Alternaria alternata (Alternaria rot fungus).